The sequence spans 432 residues: Trigger factor (432 aa).

The PPIase FKBP-type domain occupies 161–246 (EDRVTIDFTG…LKKVEERGLP (86 aa)).

This sequence belongs to the FKBP-type PPIase family. Tig subfamily.

The protein localises to the cytoplasm. The catalysed reaction is [protein]-peptidylproline (omega=180) = [protein]-peptidylproline (omega=0). In terms of biological role, involved in protein export. Acts as a chaperone by maintaining the newly synthesized protein in an open conformation. Functions as a peptidyl-prolyl cis-trans isomerase. The polypeptide is Trigger factor (Salmonella choleraesuis (strain SC-B67)).